The chain runs to 311 residues: Transcription factor BIM2 (311 aa).

Disordered regions lie at residues 1–60 and 271–311; these read MRTG…RRSK and ANQG…MKTL. Basic and acidic residues-rich tracts occupy residues 33–44 and 51–60; these read SNRDSKENDKAS and SVTEQRRRSK. In terms of domain architecture, bHLH spans 45-95; the sequence is AIRSKHSVTEQRRRSKINERFQILRELIPNSEQKRDTASFLLEVIDYVQYL.

As to quaternary structure, homodimer. Interacts with the N-terminus of BZR2/BES1. As to expression, expressed constitutively in roots, leaves, stems, and flowers.

It localises to the nucleus. Functionally, positive brassinosteroid-signaling protein. The sequence is that of Transcription factor BIM2 (BIM2) from Arabidopsis thaliana (Mouse-ear cress).